We begin with the raw amino-acid sequence, 218 residues long: MAQAKADTPEAGLKALMAALRKQGVTDPAVLTAIEKTPRDLFTPDLFKERSWEDSALPIACGQTISQPFIVGLMTQALTLEPRCRVLEIGTGSGYQTAVLSRVSRLVYTIERYRTLMKEAEARFAVLGLTNVITKFGDGWEGWPKQAPFDRILVTAAAQDEPEALLSQLKPQGVLVAPVGKGPVQSLRRYAGDGKGGFTVEVLCDVRFVPILDGVARE.

Residue serine 66 is part of the active site.

This sequence belongs to the methyltransferase superfamily. L-isoaspartyl/D-aspartyl protein methyltransferase family.

It is found in the cytoplasm. The catalysed reaction is [protein]-L-isoaspartate + S-adenosyl-L-methionine = [protein]-L-isoaspartate alpha-methyl ester + S-adenosyl-L-homocysteine. Its function is as follows. Catalyzes the methyl esterification of L-isoaspartyl residues in peptides and proteins that result from spontaneous decomposition of normal L-aspartyl and L-asparaginyl residues. It plays a role in the repair and/or degradation of damaged proteins. The chain is Protein-L-isoaspartate O-methyltransferase from Caulobacter sp. (strain K31).